We begin with the raw amino-acid sequence, 249 residues long: Eukaryotic translation initiation factor 6 (249 aa).

It belongs to the eIF-6 family. In terms of assembly, monomer. Associates with the 60S ribosomal subunit.

The protein resides in the cytoplasm. Its subcellular location is the nucleus. The protein localises to the nucleolus. Its function is as follows. Binds to the 60S ribosomal subunit and prevents its association with the 40S ribosomal subunit to form the 80S initiation complex in the cytoplasm. May also be involved in ribosome biogenesis. The polypeptide is Eukaryotic translation initiation factor 6 (Babesia bovis).